We begin with the raw amino-acid sequence, 261 residues long: Proline-rich protein HaeIII subfamily 1 (261 aa).

Positions 1–15 are cleaved as a signal peptide; it reads MLVVLFTVALLALSS. The segment at 15 to 261 is disordered; it reads SAQGPREENQ…PPQGRPQGPR (247 aa). Pro residues-rich tracts occupy residues 32–44 and 51–237; these read QRPPPSGFQPRPP and GPPP…PPTG. Residues 238–261 are compositionally biased toward low complexity; it reads GPQQTPPLAGNTQGPPQGRPQGPR.

Its subcellular location is the secreted. This chain is Proline-rich protein HaeIII subfamily 1 (Prh1), found in Mus musculus (Mouse).